A 187-amino-acid polypeptide reads, in one-letter code: Interferon alpha-1/2 (187 aa).

The N-terminal stretch at 1–23 (MALPCSFSVALVLLSCHSLCCLA) is a signal peptide. 2 cysteine pairs are disulfide-bonded: cysteine 24/cysteine 122 and cysteine 52/cysteine 160. A glycan (N-linked (GlcNAc...) asparagine) is linked at asparagine 101.

It belongs to the alpha/beta interferon family.

It is found in the secreted. Its function is as follows. Produced by macrophages, IFN-alpha have antiviral activities. Interferon stimulates the production of two enzymes: a protein kinase and an oligoadenylate synthetase. In Canis lupus familiaris (Dog), this protein is Interferon alpha-1/2.